The following is a 715-amino-acid chain: Poly(A) polymerase alpha-A (715 aa).

ATP contacts are provided by residues 82 to 84, threonine 91, 95 to 97, aspartate 149, lysine 210, tyrosine 219, and 228 to 229; these read FGP, DID, and GV. Aspartate 95, aspartate 97, and aspartate 149 together coordinate Mg(2+). A Nuclear localization signal 1 motif is present at residues 472 to 489; sequence RKQLHQLQPSHVSPKKKK. Disordered stretches follow at residues 510–543, 560–590, and 607–693; these read DSDNSMSVPSPTNATRTSPLNSSGLSQGNSPAAP, QNNSTENLGGSLNESIPESATHPGFSSTPKP, and KPVS…DLSD. 2 stretches are compositionally biased toward polar residues: residues 515–539 and 560–588; these read MSVPSPTNATRTSPLNSSGLSQGNS and QNNSTENLGGSLNESIPESATHPGFSSTP. Positions 624 to 639 match the Nuclear localization signal 2 motif; the sequence is KRTSSPSNEDSPKKNK. Residues 655-673 are compositionally biased toward basic and acidic residues; that stretch reads DQNKLETEELKEVHSEEKS. Over residues 674–692 the composition is skewed to polar residues; sequence SSPVPGSLPFSQQSSTDLS.

It belongs to the poly(A) polymerase family. In terms of assembly, monomer. It depends on Mg(2+) as a cofactor. The cofactor is Mn(2+).

It is found in the nucleus. The enzyme catalyses RNA(n) + ATP = RNA(n)-3'-adenine ribonucleotide + diphosphate. Functionally, polymerase that creates the 3'-poly(A) tail of mRNA's. May acquire specificity through interaction with a cleavage and polyadenylation factor (CPSF). This Xenopus laevis (African clawed frog) protein is Poly(A) polymerase alpha-A (papola-a).